Consider the following 436-residue polypeptide: 3-ketoacyl-CoA thiolase (436 aa).

Catalysis depends on Cys99, which acts as the Acyl-thioester intermediate. Active-site proton acceptor residues include His392 and Cys422.

This sequence belongs to the thiolase-like superfamily. Thiolase family. Heterotetramer of two alpha chains (FadJ) and two beta chains (FadI).

Its subcellular location is the cytoplasm. The enzyme catalyses an acyl-CoA + acetyl-CoA = a 3-oxoacyl-CoA + CoA. It participates in lipid metabolism; fatty acid beta-oxidation. Catalyzes the final step of fatty acid oxidation in which acetyl-CoA is released and the CoA ester of a fatty acid two carbons shorter is formed. This Citrobacter koseri (strain ATCC BAA-895 / CDC 4225-83 / SGSC4696) protein is 3-ketoacyl-CoA thiolase.